Consider the following 176-residue polypeptide: Sarcoplasmic calcium-binding protein (176 aa).

T1 is subject to N-acetylthreonine. EF-hand domains are found at residues 3–38, 55–90, 91–126, and 127–160; these read YLVSKWKIWYKSLDVNHDGIISIENVEESRNKFTDL, KWWDTYIFLTPGAEISETQFVENLGNSFKKDKAFLA, TMTACFNMIFDVIDTDKDRSIDLNEFIYAFAAFGHE, and NESVVRTAFALLKPDDDNTVPLRTVVDAWISFVT. Positions 16, 18, 20, and 27 each coordinate Ca(2+). Residues D104, D106, D108, S110, and E115 each coordinate Ca(2+).

Like parvalbumins, SCPs seem to be more abundant in fast contracting muscles, but no functional relationship can be established from this distribution. The protein is Sarcoplasmic calcium-binding protein of Mizuhopecten yessoensis (Japanese scallop).